The following is a 93-amino-acid chain: MRPIHICLNVRFLFFRPIYACNIDFITLAFAVRKSLFDDPLNPLAIFKTLFLSYSSYTTSFNSHESPCIKSFTNSTLKINIYKILVNLPYLQK.

The protein localises to the plastid. Its subcellular location is the chloroplast. This is an uncharacterized protein from Diacronema lutheri (Unicellular marine alga).